Here is a 253-residue protein sequence, read N- to C-terminus: Triosephosphate isomerase (253 aa).

Residue 9–11 (NWK) coordinates substrate. The Electrophile role is filled by His-96. Glu-169 functions as the Proton acceptor in the catalytic mechanism. Substrate is bound by residues Gly-175, Ser-215, and 236-237 (GG).

It belongs to the triosephosphate isomerase family. In terms of assembly, homodimer.

The protein localises to the cytoplasm. It catalyses the reaction D-glyceraldehyde 3-phosphate = dihydroxyacetone phosphate. Its pathway is carbohydrate biosynthesis; gluconeogenesis. The protein operates within carbohydrate degradation; glycolysis; D-glyceraldehyde 3-phosphate from glycerone phosphate: step 1/1. Its function is as follows. Involved in the gluconeogenesis. Catalyzes stereospecifically the conversion of dihydroxyacetone phosphate (DHAP) to D-glyceraldehyde-3-phosphate (G3P). The chain is Triosephosphate isomerase from Borrelia garinii subsp. bavariensis (strain ATCC BAA-2496 / DSM 23469 / PBi) (Borreliella bavariensis).